The sequence spans 389 residues: Tyrosinase-like protein phomQ1 (389 aa).

The helical transmembrane segment at 53-73 (TIIVVSVITFAAIIGCWVFLS) threads the bilayer. Cu cation is bound by residues His141 and His150. Residue Asn220 is glycosylated (N-linked (GlcNAc...) asparagine). Cu cation is bound by residues His290 and His316.

The protein belongs to the tyrosinase family. Requires Cu(2+) as cofactor.

It localises to the membrane. The protein operates within mycotoxin biosynthesis. Its function is as follows. Tyrosinase-like protein; part of the gene cluster that mediates the biosynthesis of the phomopsins, a group of hexapeptide mycotoxins which infects lupins and causes lupinosis disease in livestock. Within the pathway, phomQ1 functions as a halogenase, converting. The pathway starts with the processing of the precursor phomA by several endopeptidases including kexin proteases as well as the cluster-specific S41 family peptidase phomP1 and the oligopeptidase phomG to produce 10 identical copies of the hexapeptide Tyr-Val-Ile-Pro-Ile-Asp. After being excised from the precursor peptide, the core peptides are cyclized and modified post-translationally by enzymes encoded within the gene cluster. The timing and order of proteolysis of the phomA precursor and PTMs are still unknown. Two tyrosinase-like enzymes, phomQ1 and phomQ2, catalyze the chlorination and hydroxylation of Tyr, respectively. PhomYb, is proposed to be involved in the construction of the macrocyclic structure. The other 4 ustYa family proteins may be involved in PTMs that generate the unique structure of phomopsin A. PhomYa is required for the hydroxylation of C-beta of Tyr. PhomYc, phomYd, and phomYe are responsible for the biosynthesis of 2,3-dehydroisoleucine (dIle), 2,3-dehydroaspartic acid (dAsp), and 3,4-dehydroproline (dPro), respectively. While dIle formation by phomYc is indispensable for the installation of dAsp by phomYd, the order of the other PTMs have not been elucidated yet. Most of the biosynthetic enzymes likely have broad substrate specificity, and thus, there might be a metabolic grid from a precursor to phomopsin A. The enzyme(s) responsible for the biosynthesis of 3,4-dehydrovaline (dVal) have also not been identified yet. Finally, phomM acts as an S-adenosylmethionine-dependent alpha-N-methyltransferase that catalyzes two successive N-methylation reactions, converting N-desmethyl-phomopsin A to phomopsin A and phomopsin A further to an N,N-dimethylated congener called phomopsin E. This chain is Tyrosinase-like protein phomQ1, found in Diaporthe leptostromiformis (Lupinosis disease fungus).